Reading from the N-terminus, the 276-residue chain is Ribonuclease 3 (276 aa).

In terms of domain architecture, RNase III spans 30–161 (LTAFIRSLFK…LTGAIYLDRG (132 aa)). Mg(2+) is bound at residue E74. D78 is an active-site residue. Mg(2+)-binding residues include D147 and E150. Residue E150 is part of the active site. Residues 188–257 (NHKSRLIEHT…AEEAMGALER (70 aa)) enclose the DRBM domain.

Belongs to the ribonuclease III family. Homodimer. Mg(2+) serves as cofactor.

It is found in the cytoplasm. The catalysed reaction is Endonucleolytic cleavage to 5'-phosphomonoester.. Digests double-stranded RNA. Involved in the processing of primary rRNA transcript to yield the immediate precursors to the large and small rRNAs (23S and 16S). Processes some mRNAs, and tRNAs when they are encoded in the rRNA operon. Processes pre-crRNA and tracrRNA of type II CRISPR loci if present in the organism. This is Ribonuclease 3 from Chlorobium luteolum (strain DSM 273 / BCRC 81028 / 2530) (Pelodictyon luteolum).